The chain runs to 91 residues: Acylphosphatase (91 aa).

One can recognise an Acylphosphatase-like domain in the interval 5 to 91 (RLHAIVEGEV…KGEFTSFDTY (87 aa)). Catalysis depends on residues Arg20 and Asn38.

This sequence belongs to the acylphosphatase family.

It catalyses the reaction an acyl phosphate + H2O = a carboxylate + phosphate + H(+). This is Acylphosphatase (acyP) from Metallosphaera sedula (strain ATCC 51363 / DSM 5348 / JCM 9185 / NBRC 15509 / TH2).